We begin with the raw amino-acid sequence, 174 residues long: Peroxisome assembly protein 22 (174 aa).

Residues 9–27 (GYLAIIAAVSIGAAAYLWW) traverse the membrane as a helical segment.

The protein belongs to the peroxin-22 family.

It is found in the peroxisome membrane. Involved in peroxisome biogenesis. This chain is Peroxisome assembly protein 22 (PEX22), found in Candida glabrata (strain ATCC 2001 / BCRC 20586 / JCM 3761 / NBRC 0622 / NRRL Y-65 / CBS 138) (Yeast).